A 251-amino-acid polypeptide reads, in one-letter code: MNEAVKTLDGWFCLHDFRSIDWAAWRELNPGNQELMLNELSHFLSDMEITKNIGEGEHTIYSILGQKADLVFFTLRDSLEALNEVENRFNKLAIADYLLPTYSYISVVELSNYLASHMAGGDDPYQNKGVRARLYPALPPKKHICFYPMSKKRDGADNWYMLPMEERQQLIRDHGLIGRSYAGKVQQIIGGSIGFDDYEWGVTLFSDDALEFKRIVTEMRFDEASARYAEFGSFFIGNLLLSEQLSKLFTI.

Residues Arg133, Tyr147–Lys151, His174, Gln187, and Ser225 contribute to the Fe-coproporphyrin III site. Tyr147 is an active-site residue.

It belongs to the ChdC family. Type 1 subfamily. As to quaternary structure, homopentamer. Homohexamer in solution. The cofactor is Fe-coproporphyrin III.

It catalyses the reaction Fe-coproporphyrin III + 2 H2O2 + 2 H(+) = heme b + 2 CO2 + 4 H2O. It carries out the reaction Fe-coproporphyrin III + H2O2 + H(+) = harderoheme III + CO2 + 2 H2O. The catalysed reaction is harderoheme III + H2O2 + H(+) = heme b + CO2 + 2 H2O. Its pathway is porphyrin-containing compound metabolism; protoheme biosynthesis. Functionally, involved in coproporphyrin-dependent heme b biosynthesis. Catalyzes the decarboxylation of Fe-coproporphyrin III (coproheme) to heme b (protoheme IX), the last step of the pathway. The reaction occurs in a stepwise manner with a three-propionate intermediate. The chain is Coproheme decarboxylase from Listeria monocytogenes serovar 1/2a (strain ATCC BAA-679 / EGD-e).